The sequence spans 296 residues: NAD kinase (296 aa).

Asp72 acts as the Proton acceptor in catalysis. NAD(+) contacts are provided by residues 72-73 (DG), 146-147 (ND), Arg157, Lys174, Asp176, 187-192 (TAYALS), and Gln247.

Belongs to the NAD kinase family. The cofactor is a divalent metal cation.

Its subcellular location is the cytoplasm. It catalyses the reaction NAD(+) + ATP = ADP + NADP(+) + H(+). Its function is as follows. Involved in the regulation of the intracellular balance of NAD and NADP, and is a key enzyme in the biosynthesis of NADP. Catalyzes specifically the phosphorylation on 2'-hydroxyl of the adenosine moiety of NAD to yield NADP. In Pseudomonas putida (strain GB-1), this protein is NAD kinase.